A 247-amino-acid chain; its full sequence is Protein NipSnap homolog 3B (247 aa).

An N6-succinyllysine mark is found at K45 and K57.

The protein belongs to the NipSnap family.

This Homo sapiens (Human) protein is Protein NipSnap homolog 3B (NIPSNAP3B).